Reading from the N-terminus, the 1003-residue chain is Helicase MOV-10 (1003 aa).

Lys148 is subject to N6-acetyllysine. Phosphothreonine occurs at positions 160 and 254. The residue at position 432 (Ser432) is a Phosphoserine. 524 to 531 lines the ATP pocket; sequence GPPGTGKT. Residues 645–648 carry the DEAG box motif; sequence DEAG. Positions 921 to 965 are interaction with AGO2 and APOBEC3G; the sequence is NPLLLGHDPDWKVFLEFCKENGGYTGCPFPAKLDLQQGQNLLQGL. The segment at 966 to 1003 is disordered; it reads SKLSPSTSGPHSHDYLPQEREGEGGLSLQVEPEWRNEL. 2 positions are modified to phosphoserine: Ser969 and Ser977. A compositionally biased stretch (basic and acidic residues) spans 976-988; that stretch reads HSHDYLPQEREGE.

Belongs to the DNA2/NAM7 helicase family. SDE3 subfamily. Interacts with DICER1, AGO2, TARBP2, EIF6 and RPL7A (60S ribosome subunit); they form a large RNA-induced silencing complex (RISC). Interacts with APOBEC3G in an RNA-dependent manner. Interacts with TRIM71 (via NHL repeats) in an RNA-dependent manner. Interacts with both protein products of LIRE1, ORF1p and ORF2p. Interacts with TUT4 and, to a lesser extent, TUT7; the interactions are RNA-dependent. Interacts with AGO2, TNRC6B and UPF1; the interactions are direct and RNA-dependent. Interacts with FMR1; this interaction is direct, occurs in an RNA-dependent manner on polysomes and induces association of MOV10 with RNAs. Interacts with SHFL; the interaction increases in presence of RNA. Interacts with DHX34; the interaction is RNA-independent. Interacts with IKBKE. Interacts with RBM46. In terms of assembly, (Microbial infection) Interacts with the human hepatitis delta virus (HDV) antigen HDAg. As to quaternary structure, (Microbial infection) Interacts with HIV-1 protein GAG. Ubiquitinated by the DCX(DCAF12) complex that specifically recognizes the glutamate-leucine (Glu-Leu) degron at the C-terminus, leading to its degradation. Post-translationally, (Microbial infection) Cleaved and targeted for degradation by picornavirus proteases.

The protein localises to the cytoplasm. Its subcellular location is the P-body. The protein resides in the cytoplasmic ribonucleoprotein granule. It localises to the stress granule. It is found in the nucleus. It carries out the reaction ATP + H2O = ADP + phosphate + H(+). 5' to 3' RNA helicase that is involved in a number of cellular roles ranging from mRNA metabolism and translation, modulation of viral infectivity, inhibition of retrotransposition, or regulation of synaptic transmission. Plays an important role in innate antiviral immunity by promoting type I interferon production. Mechanistically, specifically uses IKKepsilon/IKBKE as the mediator kinase for IRF3 activation. Blocks HIV-1 virus replication at a post-entry step. Counteracts HIV-1 Vif-mediated degradation of APOBEC3G through its helicase activity by interfering with the ubiquitin-proteasome pathway. Also inhibits hepatitis B virus/HBV replication by interacting with HBV RNA and thereby inhibiting the early step of viral reverse transcription. Contributes to UPF1 mRNA target degradation by translocation along 3' UTRs. Required for microRNA (miRNA)-mediated gene silencing by the RNA-induced silencing complex (RISC). Required for both miRNA-mediated translational repression and miRNA-mediated cleavage of complementary mRNAs by RISC. In cooperation with FMR1, regulates miRNA-mediated translational repression by AGO2. Restricts retrotransposition of long interspersed element-1 (LINE-1) in cooperation with TUT4 and TUT7 counteracting the RNA chaperonne activity of L1RE1. Facilitates LINE-1 uridylation by TUT4 and TUT7. Required for embryonic viability and for normal central nervous system development and function. Plays two critical roles in early brain development: suppresses retroelements in the nucleus by directly inhibiting cDNA synthesis, while regulates cytoskeletal mRNAs to influence neurite outgrowth in the cytosol. May function as a messenger ribonucleoprotein (mRNP) clearance factor. Functionally, (Microbial infection) Required for RNA-directed transcription and replication of the human hepatitis delta virus (HDV). Interacts with small capped HDV RNAs derived from genomic hairpin structures that mark the initiation sites of RNA-dependent HDV RNA transcription. The sequence is that of Helicase MOV-10 from Homo sapiens (Human).